Here is a 146-residue protein sequence, read N- to C-terminus: Protein SprT-like (146 aa).

Residues 6-141 (YVKTVSIEDF…GCGLCQGKLI (136 aa)) enclose the SprT-like domain. H64 provides a ligand contact to Zn(2+). Residue E65 is part of the active site. Position 68 (H68) interacts with Zn(2+).

This sequence belongs to the SprT family. Zn(2+) serves as cofactor.

It is found in the cytoplasm. This is Protein SprT-like from Streptococcus thermophilus (strain CNRZ 1066).